Reading from the N-terminus, the 244-residue chain is Small ribosomal subunit protein eS6 (244 aa).

Residues 185–244 are disordered; that stretch reads RLQRKRHMRAVKRRRYAKQREEEATYAKLLAKRKKEEREAHAKRRSSARESSLRESKSKA. Residues 186 to 201 are compositionally biased toward basic residues; sequence LQRKRHMRAVKRRRYA. Residues 231–244 are compositionally biased toward basic and acidic residues; it reads SARESSLRESKSKA.

Belongs to the eukaryotic ribosomal protein eS6 family. Ribosomal protein S6 is the major substrate of protein kinases in eukaryote ribosomes.

Its function is as follows. Component of the 40S small ribosomal subunit. Plays an important role in controlling cell growth and proliferation through the selective translation of particular classes of mRNA. The protein is Small ribosomal subunit protein eS6 (RPS6) of Branchiostoma floridae (Florida lancelet).